The following is a 612-amino-acid chain: Netrin unc-6 (612 aa).

The first 21 residues, 1 to 21 (MITSVLRYVLALYFCMGIAHG), serve as a signal peptide directing secretion. One can recognise a Laminin N-terminal domain in the interval 43-290 (RPVRCVPEFI…SMGELAVGGR (248 aa)). 3 N-linked (GlcNAc...) asparagine glycosylation sites follow: N114, N128, and N268. C117 and C149 are oxidised to a cystine. Intrachain disulfides connect C291–C300, C293–C310, C312–C321, C324–C344, C347–C356, C349–C374, C377–C386, C389–C407, C410–C422, C412–C429, C431–C440, C443–C457, C478–C547, and C494–C604. Laminin EGF-like domains are found at residues 291-346 (CKCN…SCVA), 347-409 (CNCN…ACKS), and 410-459 (CGCH…PCIK). A glycan (N-linked (GlcNAc...) asparagine) is linked at N368. N423 carries an N-linked (GlcNAc...) asparagine glycan. The region spanning 478–604 (CSKCRIVPKR…FSKKDKLGQC (127 aa)) is the NTR domain. N564 carries an N-linked (GlcNAc...) asparagine glycan.

In terms of assembly, binds to unc-5 and unc-40 receptors.

It localises to the secreted. Its subcellular location is the extracellular space. The protein localises to the extracellular matrix. It is found in the basement membrane. Functionally, component of an extracellular matrix cue that guides dorsoventral migrations on the epidermis. Required for the guidance of pioneer axons and migrating cells along the body wall. In particular, it is required for the guidance of axons from neurons, including SubL neurons and AIY interneurons, into the nerve ring. During gonad morphogenesis, involved in distal tip cell (DTC) migration from the dorsal side of the hermaphrodite body to the midbody to allow for formation of gonad arms. Its association with either unc-40 or unc-5 receptors will lead to axon attraction or repulsion, respectively. Involved in dendritic morphogenesis; may act by association with unc-40 at the tips of growing dendrites for interaction with unc-5 on the apposing branch to induce mutual repulsion. Involved in the positioning of ray 1, the most anterior ray sensilium, in the male tail. Required for the formation of synapses between the AVA interneurons and the PHB sensory neurons. The chain is Netrin unc-6 from Caenorhabditis elegans.